The sequence spans 145 residues: D-aminoacyl-tRNA deacylase (145 aa).

The Gly-cisPro motif, important for rejection of L-amino acids motif lies at 137–138 (GP).

It belongs to the DTD family. As to quaternary structure, homodimer.

It localises to the cytoplasm. It catalyses the reaction glycyl-tRNA(Ala) + H2O = tRNA(Ala) + glycine + H(+). The enzyme catalyses a D-aminoacyl-tRNA + H2O = a tRNA + a D-alpha-amino acid + H(+). In terms of biological role, an aminoacyl-tRNA editing enzyme that deacylates mischarged D-aminoacyl-tRNAs. Also deacylates mischarged glycyl-tRNA(Ala), protecting cells against glycine mischarging by AlaRS. Acts via tRNA-based rather than protein-based catalysis; rejects L-amino acids rather than detecting D-amino acids in the active site. By recycling D-aminoacyl-tRNA to D-amino acids and free tRNA molecules, this enzyme counteracts the toxicity associated with the formation of D-aminoacyl-tRNA entities in vivo and helps enforce protein L-homochirality. The sequence is that of D-aminoacyl-tRNA deacylase from Pseudomonas putida (strain ATCC 700007 / DSM 6899 / JCM 31910 / BCRC 17059 / LMG 24140 / F1).